Consider the following 30-residue polypeptide: Bowman-Birk type proteinase inhibitor 4 (30 aa).

Intrachain disulfides connect C9–C24 and C14–C22.

Inhibits trypsin (IC(50)=17.60 nM) and, to a lesser extent, alpha-chymotrypsin (IC(50)=2.38 uM). This is Bowman-Birk type proteinase inhibitor 4 from Lathyrus sativus (White vetchling).